The primary structure comprises 64 residues: Makatoxin-1 (64 aa).

The LCN-type CS-alpha/beta domain maps to 2 to 64; it reads RDAYIADSEN…VPIRISGSCR (63 aa). 4 disulfide bridges follow: C12/C63, C16/C36, C22/C46, and C26/C48.

In terms of tissue distribution, expressed by the venom gland.

It localises to the secreted. Functionally, this protein markedly relaxes the rat carbachol-precontracted anococcygeus muscle. This relaxation is inhibited by the inhibitor of nitric oxide (NO) synthase, N-nitro-L-arginine methyl ester (L-NAME), suggesting that the response induced by this protein is NO-mediated. The chain is Makatoxin-1 from Olivierus martensii (Manchurian scorpion).